The primary structure comprises 257 residues: G2/mitotic-specific cyclin S13-7 (257 aa).

The protein belongs to the cyclin family. Cyclin AB subfamily. Interacts with the CDC2 protein kinase to form a serine/threonine kinase holoenzyme complex also known as maturation promoting factor (MPF). The cyclin subunit imparts substrate specificity to the complex.

Its function is as follows. Essential for the control of the cell cycle at the G2/M (mitosis) transition. The polypeptide is G2/mitotic-specific cyclin S13-7 (Glycine max (Soybean)).